A 349-amino-acid chain; its full sequence is Protein-glutamate methylesterase/protein-glutamine glutaminase (349 aa).

Positions 5-122 constitute a Response regulatory domain; the sequence is RVLSVDDSAL…REGMLAYSEM (118 aa). D56 carries the 4-aspartylphosphate modification. A CheB-type methylesterase domain is found at 152-344; that stretch reads LLSSEKLIAI…QQMLAKISAG (193 aa). Residues S164, H190, and D286 contribute to the active site.

This sequence belongs to the CheB family. Phosphorylated by CheA. Phosphorylation of the N-terminal regulatory domain activates the methylesterase activity.

The protein localises to the cytoplasm. It catalyses the reaction [protein]-L-glutamate 5-O-methyl ester + H2O = L-glutamyl-[protein] + methanol + H(+). It carries out the reaction L-glutaminyl-[protein] + H2O = L-glutamyl-[protein] + NH4(+). In terms of biological role, involved in chemotaxis. Part of a chemotaxis signal transduction system that modulates chemotaxis in response to various stimuli. Catalyzes the demethylation of specific methylglutamate residues introduced into the chemoreceptors (methyl-accepting chemotaxis proteins or MCP) by CheR. Also mediates the irreversible deamidation of specific glutamine residues to glutamic acid. This Escherichia coli O6:H1 (strain CFT073 / ATCC 700928 / UPEC) protein is Protein-glutamate methylesterase/protein-glutamine glutaminase.